Reading from the N-terminus, the 128-residue chain is Small ribosomal subunit protein uS12 (128 aa).

Asp89 carries the 3-methylthioaspartic acid modification. The disordered stretch occupies residues 101 to 128; that stretch reads SLDTSGVADRRQGRSKYGAKRPKGAAAK. The segment covering 113–128 has biased composition (basic residues); it reads GRSKYGAKRPKGAAAK.

The protein belongs to the universal ribosomal protein uS12 family. As to quaternary structure, part of the 30S ribosomal subunit. Contacts proteins S8 and S17. May interact with IF1 in the 30S initiation complex.

With S4 and S5 plays an important role in translational accuracy. Its function is as follows. Interacts with and stabilizes bases of the 16S rRNA that are involved in tRNA selection in the A site and with the mRNA backbone. Located at the interface of the 30S and 50S subunits, it traverses the body of the 30S subunit contacting proteins on the other side and probably holding the rRNA structure together. The combined cluster of proteins S8, S12 and S17 appears to hold together the shoulder and platform of the 30S subunit. In Prosthecochloris aestuarii (strain DSM 271 / SK 413), this protein is Small ribosomal subunit protein uS12.